A 552-amino-acid polypeptide reads, in one-letter code: Oxygen-dependent choline dehydrogenase (552 aa).

7–36 (DYIIIGAGSAGNVLAARLTEDKDTTVLLLE) provides a ligand contact to FAD. The active-site Proton acceptor is His477.

The protein belongs to the GMC oxidoreductase family. It depends on FAD as a cofactor.

The enzyme catalyses choline + A = betaine aldehyde + AH2. It catalyses the reaction betaine aldehyde + NAD(+) + H2O = glycine betaine + NADH + 2 H(+). Its pathway is amine and polyamine biosynthesis; betaine biosynthesis via choline pathway; betaine aldehyde from choline (cytochrome c reductase route): step 1/1. Involved in the biosynthesis of the osmoprotectant glycine betaine. Catalyzes the oxidation of choline to betaine aldehyde and betaine aldehyde to glycine betaine at the same rate. The sequence is that of Oxygen-dependent choline dehydrogenase from Acinetobacter baumannii (strain AB307-0294).